Reading from the N-terminus, the 324-residue chain is Glyoxylate/hydroxypyruvate reductase B (324 aa).

Residues Arg237 and Glu266 contribute to the active site. His285 functions as the Proton donor in the catalytic mechanism.

The protein belongs to the D-isomer specific 2-hydroxyacid dehydrogenase family. GhrB subfamily. In terms of assembly, homodimer.

It is found in the cytoplasm. It catalyses the reaction glycolate + NADP(+) = glyoxylate + NADPH + H(+). The catalysed reaction is (R)-glycerate + NAD(+) = 3-hydroxypyruvate + NADH + H(+). The enzyme catalyses (R)-glycerate + NADP(+) = 3-hydroxypyruvate + NADPH + H(+). Functionally, catalyzes the NADPH-dependent reduction of glyoxylate and hydroxypyruvate into glycolate and glycerate, respectively. This is Glyoxylate/hydroxypyruvate reductase B from Enterobacter sp. (strain 638).